The following is a 305-amino-acid chain: Ribonuclease BN (305 aa).

7 residues coordinate Zn(2+): H64, H66, D68, H69, H141, D212, and H270. D68 (proton acceptor) is an active-site residue.

Belongs to the RNase Z family. RNase BN subfamily. As to quaternary structure, homodimer. The cofactor is Zn(2+).

In terms of biological role, zinc phosphodiesterase, which has both exoribonuclease and endoribonuclease activities. The polypeptide is Ribonuclease BN (Salmonella paratyphi C (strain RKS4594)).